The following is a 273-amino-acid chain: Large ribosomal subunit protein uL2 (273 aa).

Residues Val-223–Gly-273 form a disordered region. The segment covering Lys-262–Gly-273 has biased composition (basic and acidic residues).

Belongs to the universal ribosomal protein uL2 family. Part of the 50S ribosomal subunit. Forms a bridge to the 30S subunit in the 70S ribosome.

In terms of biological role, one of the primary rRNA binding proteins. Required for association of the 30S and 50S subunits to form the 70S ribosome, for tRNA binding and peptide bond formation. It has been suggested to have peptidyltransferase activity; this is somewhat controversial. Makes several contacts with the 16S rRNA in the 70S ribosome. This chain is Large ribosomal subunit protein uL2, found in Syntrophus aciditrophicus (strain SB).